The chain runs to 396 residues: S-adenosylmethionine synthase (396 aa).

Histidine 16 contacts ATP. Position 18 (aspartate 18) interacts with Mg(2+). Residue glutamate 44 coordinates K(+). Glutamate 57 and glutamine 100 together coordinate L-methionine. Residues 100-110 are flexible loop; sequence QSPDINQGVDR. ATP-binding positions include 165 to 167, aspartate 240, 246 to 247, alanine 263, and lysine 267; these read DAK and RK. An L-methionine-binding site is contributed by aspartate 240. Lysine 271 is an L-methionine binding site.

The protein belongs to the AdoMet synthase family. In terms of assembly, homotetramer; dimer of dimers. It depends on Mg(2+) as a cofactor. K(+) serves as cofactor.

The protein localises to the cytoplasm. The catalysed reaction is L-methionine + ATP + H2O = S-adenosyl-L-methionine + phosphate + diphosphate. It participates in amino-acid biosynthesis; S-adenosyl-L-methionine biosynthesis; S-adenosyl-L-methionine from L-methionine: step 1/1. Catalyzes the formation of S-adenosylmethionine (AdoMet) from methionine and ATP. The overall synthetic reaction is composed of two sequential steps, AdoMet formation and the subsequent tripolyphosphate hydrolysis which occurs prior to release of AdoMet from the enzyme. The protein is S-adenosylmethionine synthase of Pseudomonas fluorescens (strain Pf0-1).